Reading from the N-terminus, the 408-residue chain is Adenylosuccinate synthetase (408 aa).

Residues 12 to 18 (GDEGKGK) and 40 to 42 (GHT) contribute to the GTP site. The active-site Proton acceptor is the Asp13. Residues Asp13 and Gly40 each contribute to the Mg(2+) site. IMP contacts are provided by residues 13-16 (DEGK), 38-41 (NAGH), Thr121, Arg135, Gln213, Thr228, and Arg292. His41 (proton donor) is an active-site residue. Residue 288 to 294 (TTTGRPR) participates in substrate binding. GTP contacts are provided by residues Arg294, 320-322 (KLD), and 393-395 (STS).

It belongs to the adenylosuccinate synthetase family. As to quaternary structure, homodimer. The cofactor is Mg(2+).

The protein resides in the cytoplasm. It carries out the reaction IMP + L-aspartate + GTP = N(6)-(1,2-dicarboxyethyl)-AMP + GDP + phosphate + 2 H(+). It functions in the pathway purine metabolism; AMP biosynthesis via de novo pathway; AMP from IMP: step 1/2. In terms of biological role, plays an important role in the de novo pathway of purine nucleotide biosynthesis. Catalyzes the first committed step in the biosynthesis of AMP from IMP. The chain is Adenylosuccinate synthetase from Thermus thermophilus (strain ATCC BAA-163 / DSM 7039 / HB27).